The primary structure comprises 196 residues: Orotate phosphoribosyltransferase (196 aa).

117-125 is a 5-phospho-alpha-D-ribose 1-diphosphate binding site; the sequence is EDIVTTGLS. Orotate is bound by residues Thr-121 and Arg-149.

This sequence belongs to the purine/pyrimidine phosphoribosyltransferase family. PyrE subfamily. In terms of assembly, homodimer. Mg(2+) is required as a cofactor.

It carries out the reaction orotidine 5'-phosphate + diphosphate = orotate + 5-phospho-alpha-D-ribose 1-diphosphate. It participates in pyrimidine metabolism; UMP biosynthesis via de novo pathway; UMP from orotate: step 1/2. In terms of biological role, catalyzes the transfer of a ribosyl phosphate group from 5-phosphoribose 1-diphosphate to orotate, leading to the formation of orotidine monophosphate (OMP). The chain is Orotate phosphoribosyltransferase from Methylorubrum extorquens (strain PA1) (Methylobacterium extorquens).